Consider the following 241-residue polypeptide: 4-hydroxy-tetrahydrodipicolinate reductase (241 aa).

NAD(+) is bound by residues Gly7 to Met12, Gly74 to Thr76, and Ser98 to Met101. Catalysis depends on His131, which acts as the Proton donor/acceptor. His132 contributes to the (S)-2,3,4,5-tetrahydrodipicolinate binding site. Residue Lys135 is the Proton donor of the active site. Residue Gly141–Ser142 participates in (S)-2,3,4,5-tetrahydrodipicolinate binding.

Belongs to the DapB family.

The protein localises to the cytoplasm. It carries out the reaction (S)-2,3,4,5-tetrahydrodipicolinate + NAD(+) + H2O = (2S,4S)-4-hydroxy-2,3,4,5-tetrahydrodipicolinate + NADH + H(+). It catalyses the reaction (S)-2,3,4,5-tetrahydrodipicolinate + NADP(+) + H2O = (2S,4S)-4-hydroxy-2,3,4,5-tetrahydrodipicolinate + NADPH + H(+). The protein operates within amino-acid biosynthesis; L-lysine biosynthesis via DAP pathway; (S)-tetrahydrodipicolinate from L-aspartate: step 4/4. In terms of biological role, catalyzes the conversion of 4-hydroxy-tetrahydrodipicolinate (HTPA) to tetrahydrodipicolinate. The polypeptide is 4-hydroxy-tetrahydrodipicolinate reductase (Alkaliphilus oremlandii (strain OhILAs) (Clostridium oremlandii (strain OhILAs))).